The following is a 400-amino-acid chain: Selection and upkeep of intraepithelial T-cells protein 2 (400 aa).

An N-terminal signal peptide occupies residues 1-21; the sequence is MGATGVLLCVVLHFLQMVTQS. Residues 22-240 are Extracellular-facing; it reads SEKFTVTGLQ…LSGELFSWKR (219 aa). The Ig-like V-type domain maps to 23-133; that stretch reads EKFTVTGLQR…VGEFYEEHIT (111 aa). 2 disulfides stabilise this stretch: C46-C120 and C160-C214. Positions 139–225 constitute an Ig-like C1-type domain; sequence ATSSVMYILM…LQNLLTHQEE (87 aa). The N-linked (GlcNAc...) asparagine glycan is linked to N197. The chain crosses the membrane as a helical span at residues 241-261; it reads VWIMILTTIGFMMIAFCMTYC. At 262-280 the chain is on the cytoplasmic side; it reads VQQHLLYGTFSKGKCHWLK. The chain crosses the membrane as a helical span at residues 281–301; sequence STMIFMFSVIAVTGVMLILHL. The Extracellular portion of the chain corresponds to 302–321; the sequence is KQRVPVSDQHFELDTLWLED. Residues 322-342 traverse the membrane as a helical segment; sequence ISVILCVLIVFIIKLISFIYF. Over 343 to 400 the chain is Cytoplasmic; the sequence is RLEGDHQGWSLPPYLSATPTAAICRLAVPEYSRGHLQLDSEDDLAGMGPSPFFITPCF.

It belongs to the SKINT family. As to expression, expressed in skin, thymus and mammary gland.

It is found in the membrane. Functionally, may act by engaging a cell surface molecule on immature T-cells in the embryonic thymus. This Mus musculus (Mouse) protein is Selection and upkeep of intraepithelial T-cells protein 2 (Skint2).